Here is a 505-residue protein sequence, read N- to C-terminus: Tyrosine-protein kinase isoform SRK1 (505 aa).

2 stretches are compositionally biased toward polar residues: residues 1-10 and 18-31; these read MGSCCSSQDG and AGST…SQSV. A disordered region spans residues 1 to 53; it reads MGSCCSSQDGDGNGKATAGSTVDSHELSQSVKGKIKQPEPKPKPPPQVPPAQD. Residues 54–116 enclose the SH3 domain; sequence VKYPIYVGKY…PSNYVAEYKS (63 aa). The SH2 domain occupies 122 to 214; sequence WFLGKIKRVE…GLCCKLLYPC (93 aa). Positions 240–493 constitute a Protein kinase domain; it reads IKLLRRLGAG…TLQWQLEEFF (254 aa). Residues 246–254 and Lys268 each bind ATP; that span reads LGAGQFGEV. Residue Asp359 is the Proton acceptor of the active site.

It belongs to the protein kinase superfamily. Tyr protein kinase family. SRC subfamily.

The protein localises to the cytoplasm. The enzyme catalyses L-tyrosyl-[protein] + ATP = O-phospho-L-tyrosyl-[protein] + ADP + H(+). This chain is Tyrosine-protein kinase isoform SRK1 (SRK1), found in Spongilla lacustris (Freshwater sponge).